The primary structure comprises 543 residues: ADIPOR-like receptor IZH3 (543 aa).

Over 1–259 (MMDSSSKSLT…NWYGWHNETS (259 aa)) the chain is Lumenal. 4 N-linked (GlcNAc...) asparagine glycosylation sites follow: Asn-45, Asn-123, Asn-153, and Asn-256. A helical membrane pass occupies residues 260–280 (NIWSHLLGAIYIIYLAIYDFP). Over 281–295 (QSEVWRNSQVPPQAR) the chain is Cytoplasmic. A helical membrane pass occupies residues 296-316 (WIVFMFLAAALKCMLSSVFWH). The Lumenal segment spans residues 317-330 (TFNGTSFLKLRSKF). An N-linked (GlcNAc...) asparagine glycan is attached at Asn-319. The helical transmembrane segment at 331–353 (ACVDYSGITILITASILTTEFVT) threads the bilayer. Residues 354 to 357 (MYSC) are Cytoplasmic-facing. The chain crosses the membrane as a helical span at residues 358–378 (YWAMYTYMSISLALGVFGVFM). Residues 379-395 (NWSPRFDRPEARPLRIR) are Lumenal-facing. A helical membrane pass occupies residues 396 to 416 (FFILLATMGVLSFLHLIFLTD). The Cytoplasmic portion of the chain corresponds to 417–425 (LHYAATLFS). A helical membrane pass occupies residues 426-446 (PVTYKSVVWYLVGVVFYGSFI). Residues 447 to 505 (PERFRSDVQVDKTIPTNYELSTDLEIITKQREIHFREVPTAHSKCSSCPSHAKSFKSLW) lie on the Lumenal side of the membrane. Residues 506–526 (WVDYFGCSHTFWHFFVVLGVI) traverse the membrane as a helical segment. The Cytoplasmic segment spans residues 527 to 543 (GHYRAILDMFAKRWILS).

It belongs to the ADIPOR family.

The protein localises to the endoplasmic reticulum membrane. Functionally, ADIPOR-like receptor involved in zinc metabolism either by altering membrane sterol content or by directly altering cellular zinc levels. In Saccharomyces cerevisiae (strain ATCC 204508 / S288c) (Baker's yeast), this protein is ADIPOR-like receptor IZH3 (IZH3).